Consider the following 501-residue polypeptide: Glycerol kinase (501 aa).

T17 contacts ADP. Residues T17, T18, and S19 each contribute to the ATP site. T17 contacts sn-glycerol 3-phosphate. R21 provides a ligand contact to ADP. R87, E88, Y139, and D243 together coordinate sn-glycerol 3-phosphate. Glycerol contacts are provided by R87, E88, Y139, D243, and Q244. ADP-binding residues include T265 and G308. Residues T265, G308, Q312, and G409 each contribute to the ATP site. The ADP site is built by G409 and N413.

Belongs to the FGGY kinase family.

It carries out the reaction glycerol + ATP = sn-glycerol 3-phosphate + ADP + H(+). The protein operates within polyol metabolism; glycerol degradation via glycerol kinase pathway; sn-glycerol 3-phosphate from glycerol: step 1/1. Inhibited by fructose 1,6-bisphosphate (FBP). Functionally, key enzyme in the regulation of glycerol uptake and metabolism. Catalyzes the phosphorylation of glycerol to yield sn-glycerol 3-phosphate. This is Glycerol kinase from Pseudomonas syringae pv. syringae (strain B728a).